The following is a 474-amino-acid chain: Methylenetetrahydrofolate--tRNA-(uracil-5-)-methyltransferase TrmFO (474 aa).

Residue 13–18 coordinates FAD; that stretch reads GGGLAG.

It belongs to the MnmG family. TrmFO subfamily. It depends on FAD as a cofactor.

The protein resides in the cytoplasm. It carries out the reaction uridine(54) in tRNA + (6R)-5,10-methylene-5,6,7,8-tetrahydrofolate + NADH + H(+) = 5-methyluridine(54) in tRNA + (6S)-5,6,7,8-tetrahydrofolate + NAD(+). The catalysed reaction is uridine(54) in tRNA + (6R)-5,10-methylene-5,6,7,8-tetrahydrofolate + NADPH + H(+) = 5-methyluridine(54) in tRNA + (6S)-5,6,7,8-tetrahydrofolate + NADP(+). In terms of biological role, catalyzes the folate-dependent formation of 5-methyl-uridine at position 54 (M-5-U54) in all tRNAs. The sequence is that of Methylenetetrahydrofolate--tRNA-(uracil-5-)-methyltransferase TrmFO from Bartonella tribocorum (strain CIP 105476 / IBS 506).